The sequence spans 490 residues: Betaine aldehyde dehydrogenase (490 aa).

K(+)-binding residues include Thr-26, Ile-27, and Asp-93. 150–152 (GAW) is a binding site for NAD(+). Residue Lys-162 is the Charge relay system of the active site. Residue 176 to 179 (KPSE) coordinates NAD(+). Residue Val-180 coordinates K(+). 230–233 (GVAS) lines the NAD(+) pocket. Leu-246 contacts K(+). The Proton acceptor role is filled by Glu-252. NAD(+)-binding residues include Gly-254, Cys-286, and Glu-387. Residue Cys-286 is the Nucleophile of the active site. Cys-286 bears the Cysteine sulfenic acid (-SOH) mark. Residues Lys-457 and Gly-460 each coordinate K(+). The active-site Charge relay system is Glu-464.

This sequence belongs to the aldehyde dehydrogenase family. In terms of assembly, dimer of dimers. K(+) serves as cofactor.

The catalysed reaction is betaine aldehyde + NAD(+) + H2O = glycine betaine + NADH + 2 H(+). It functions in the pathway amine and polyamine biosynthesis; betaine biosynthesis via choline pathway; betaine from betaine aldehyde: step 1/1. Involved in the biosynthesis of the osmoprotectant glycine betaine. Catalyzes the irreversible oxidation of betaine aldehyde to the corresponding acid. The protein is Betaine aldehyde dehydrogenase of Escherichia coli (strain SMS-3-5 / SECEC).